Consider the following 408-residue polypeptide: Two-pore potassium channel 5 (408 aa).

Disordered regions lie at residues 1–29 (MEPLISPQPRFRLQPIPENPSSSSSSASI) and 58–82 (QSVQDDKEDQDSDSDETNRFLSQTR). Positions 15 to 29 (PIPENPSSSSSSASI) are enriched in low complexity. The Stromal segment spans residues 22–115 (SSSSSASITI…TKKPSPVSKS (94 aa)). Positions 63–72 (DKEDQDSDSD) are enriched in acidic residues. Residues 116 to 136 (IIRQAIFLLIVYLTLGVSIYS) form a helical membrane-spanning segment. Residues 152 to 171 (DALYFCIVTMCTIGYGDIAP) constitute an intramembrane region (pore-forming). A helical membrane pass occupies residues 178–198 (IFAVVFVLFGFGFLDILLSGV). Residues 199 to 248 (VNYVLDLQESMILTGIQTRQHHQHHHHHRFSAKDYIIDFEKGRMRIRMKV) are Stromal-facing. Residues 249–269 (CLALCVVVLCIGVGALVLHFV) traverse the membrane as a helical segment. Positions 276–295 (DSVYLSVMSVTTVGYGDRAF) form an intramembrane region, pore-forming. A helical transmembrane segment spans residues 302-322 (LFAAVWLLVSTLAVARAFLYL). Topologically, residues 323-408 (AEARIDRRHR…TLPDLLGDPL (86 aa)) are stromal. EF-hand domains follow at residues 339–374 (LNREITVDDLLKADTYQHGFISKSEYIVLKLKEMGK) and 378–408 (KDIDQVVIQFEKLDPNQIGKITLPDLLGDPL). 6 residues coordinate Ca(2+): D352, E363, D391, N393, K397, and D402.

The protein belongs to the two pore domain potassium channel (TC 1.A.1.7) family. In terms of assembly, homodimer. In terms of tissue distribution, expressed in hydathodes and the vascular tissues of roots, stems, leaves and flowers.

The protein localises to the vacuole membrane. Its function is as follows. Probable voltage-independent potassium-selective tonoplast ion channel. This is Two-pore potassium channel 5 (TPK5) from Arabidopsis thaliana (Mouse-ear cress).